We begin with the raw amino-acid sequence, 85 residues long: Toxin CsE8 (85 aa).

The signal sequence occupies residues 1 to 19 (MNSLLMITACLVLFGTVWS). Residues 20 to 83 (EKGYLVHEDT…TWPLIGKLCG (64 aa)) form the LCN-type CS-alpha/beta domain. Intrachain disulfides connect Cys-31–Cys-82, Cys-35–Cys-58, Cys-44–Cys-63, and Cys-48–Cys-65. Position 82 is a cysteine amide (Cys-82).

This sequence belongs to the long (4 C-C) scorpion toxin superfamily. Sodium channel inhibitor family. Beta subfamily. In terms of tissue distribution, expressed by the venom gland.

The protein localises to the secreted. Beta toxins bind voltage-independently at site-4 of sodium channels (Nav) and shift the voltage of activation toward more negative potentials thereby affecting sodium channel activation and promoting spontaneous and repetitive firing. The polypeptide is Toxin CsE8 (Centruroides sculpturatus (Arizona bark scorpion)).